Here is a 152-residue protein sequence, read N- to C-terminus: NADH-ubiquinone oxidoreductase chain 4 (152 aa).

4 helical membrane-spanning segments follow: residues 2–22, 43–63, 84–104, and 128–148; these read FSGA…YFCL, ILLP…LALP, ITIV…LHMF, and MLMF…NIIL.

The protein belongs to the complex I subunit 4 family.

It is found in the mitochondrion membrane. The enzyme catalyses a ubiquinone + NADH + 5 H(+)(in) = a ubiquinol + NAD(+) + 4 H(+)(out). Its function is as follows. Core subunit of the mitochondrial membrane respiratory chain NADH dehydrogenase (Complex I) that is believed to belong to the minimal assembly required for catalysis. Complex I functions in the transfer of electrons from NADH to the respiratory chain. The immediate electron acceptor for the enzyme is believed to be ubiquinone. The protein is NADH-ubiquinone oxidoreductase chain 4 (MT-ND4) of Macaca fascicularis (Crab-eating macaque).